The sequence spans 253 residues: Probable transcriptional regulatory protein Hore_12350 (253 aa).

Residues 1-21 (MAGHSKWANIKHKKAKEDRKR) are disordered.

The protein belongs to the TACO1 family.

The protein resides in the cytoplasm. The sequence is that of Probable transcriptional regulatory protein Hore_12350 from Halothermothrix orenii (strain H 168 / OCM 544 / DSM 9562).